Here is a 345-residue protein sequence, read N- to C-terminus: Nuclear distribution protein nudE-like 1 (345 aa).

The stretch at 28–190 (QSFQEARDEL…LAVRERQQEV (163 aa)) forms a coiled coil. The tract at residues 56 to 166 (VQAEQRNRDL…LDEKESLLVS (111 aa)) is self-association. Positions 64–189 (DLQADNQRLK…ELAVRERQQE (126 aa)) are interaction with KATNB1. The segment at 114 to 133 (YVRELEQANDDLERAKRATI) is required for interaction with PAFAH1B1. An interaction with CENPF region spans residues 175–345 (RDLRQELAVR…SAPGMLPLSV (171 aa)). The segment at 189–256 (EVTRKSAPSS…SARISALNIV (68 aa)) is interaction with YWHAE. The interaction with NEFL stretch occupies residues 191–345 (TRKSAPSSPT…SAPGMLPLSV (155 aa)). The interaction with KATNA1 stretch occupies residues 195–256 (APSSPTLDCE…SARISALNIV (62 aa)). Residue S215 is modified to Phosphoserine. Positions 217-240 (PATPVGKGTENSFPSPKAIPNGFG) are disordered. Position 219 is a phosphothreonine (T219). The residue at position 231 (S231) is a Phosphoserine. An interaction with DISC1 region spans residues 241 to 280 (TSPLTPSARISALNIVGDLLRKVGALESKLAACRNFAKDQ). S242 bears the Phosphoserine; by CDK1 mark. Phosphothreonine; by CDK1 and MAPK1 is present on T245. Positions 256-291 (VGDLLRKVGALESKLAACRNFAKDQASRKSYVPGSV) are required for localization to the centrosome and interaction with dynein, dynactin, tubulin gamma, PCM1 and PCNT. Residue C273 is the site of S-palmitoyl cysteine; by ZDHHC2, ZDHHC3 and ZDHHC7 attachment. The tract at residues 314–345 (KGAVNGFDPAPPPPGLGSSRPSSAPGMLPLSV) is disordered. Over residues 329–339 (LGSSRPSSAPG) the composition is skewed to low complexity. Phosphoserine is present on S344.

This sequence belongs to the nudE family. In terms of assembly, interacts with PLEKHM1 (via N- and C-terminus). Interacts with dynactin, PCM1 and PCNT. Interacts (via C-terminus) with CENPF. Self-associates. Interacts with DISC1, dynein, tubulin gamma, KATNA1, KATNB1, microtubules, PAFAHB1 and YWHAE. Interacts directly with NEFL and indirectly with NEFH. Interacts with ZNF365. Interacts with GTP-bound RAB9A; the interaction may lead to RAB9A-dynein motor tethering. In terms of processing, phosphorylated by CDK1 and MAPK1. Phosphorylated in mitosis. Phosphorylated by CDK5. Phosphorylation by CDK5 promotes interaction with KATNA1 and YWHAE. Palmitoylation at Cys-273 reduces affinity for dynein. In terms of tissue distribution, expressed in brain, liver, lung and testis (at protein level). Expressed in brain, epididymis, eye, heart, kidney, large intestine, liver, ovary, pancreas, prostate, skeletal muscle, smooth muscle, spleen, submaxillary gland, testis, thymus and thyroid. Within the brain expression is pronounced in the cortex, hippocampus, olfactory bulb, striatum, thalamic and hypothalamic structures and in the molecular layer of the cerebellum. Largely excluded from cortical progenitor cells which express NDE1.

Its subcellular location is the cytoplasm. It is found in the cytoskeleton. It localises to the microtubule organizing center. The protein resides in the centrosome. The protein localises to the chromosome. Its subcellular location is the centromere. It is found in the kinetochore. It localises to the spindle. Its function is as follows. Required for organization of the cellular microtubule array and microtubule anchoring at the centrosome. May regulate microtubule organization at least in part by targeting the microtubule severing protein KATNA1 to the centrosome. Also positively regulates the activity of the minus-end directed microtubule motor protein dynein. May enhance dynein-mediated microtubule sliding by targeting dynein to the microtubule plus ends. Required for several dynein- and microtubule-dependent processes such as the maintenance of Golgi integrity, the centripetal motion of secretory vesicles and the coupling of the nucleus and centrosome. Also required during brain development for the migration of newly formed neurons from the ventricular/subventricular zone toward the cortical plate. Plays a role, together with DISC1, in the regulation of neurite outgrowth. Required for mitosis in some cell types but appears to be dispensible for mitosis in cortical neuronal progenitors, which instead requires NDE1. Facilitates the polymerization of neurofilaments from the individual subunits NEFH and NEFL. Positively regulates lysosome peripheral distribution and ruffled border formation in osteoclasts. Plays a role, together with DISC1, in the regulation of neurite outgrowth. May act as a RAB9A/B effector that tethers RAB9-associated late endosomes to the dynein motor for their retrograde transport to the trans-Golgi network. This chain is Nuclear distribution protein nudE-like 1, found in Mus musculus (Mouse).